Reading from the N-terminus, the 450-residue chain is Crh-like protein 4 (450 aa).

An N-terminal signal peptide occupies residues Met1–Ala21. A disulfide bridge links Cys27 with Cys34. A GH16 domain is found at Tyr46 to Ala228. The active-site Nucleophile is Glu119. The active-site Proton donor is Glu123. The chitin site is built by Glu123, Lys201, Trp205, and Thr216. A glycan (N-linked (GlcNAc...) asparagine) is linked at Asn383.

Belongs to the glycosyl hydrolase 16 family. CRH1 subfamily. Post-translationally, the GPI-like anchor contains a phosphoceramide lipid group. The anchor position has not been determined.

Its subcellular location is the cell membrane. It is found in the secreted. It localises to the cell wall. It carries out the reaction Random endo-hydrolysis of N-acetyl-beta-D-glucosaminide (1-&gt;4)-beta-linkages in chitin and chitodextrins.. Dual chitinase/transglycosylase that plays a role in cell wall architecture. Chitinase and transglycosylase activities are coupled. Required for the polysaccharide cross-linking at the septa and the cell wall. More specifically, transfers chitin to 1,6-beta-glucan in the cell wall. This chain is Crh-like protein 4, found in Aspergillus fumigatus (strain ATCC MYA-4609 / CBS 101355 / FGSC A1100 / Af293) (Neosartorya fumigata).